A 291-amino-acid chain; its full sequence is Protease HtpX homolog (291 aa).

Transmembrane regions (helical) follow at residues 11–31 (INTFLILFVFILACGGFGLLA) and 34–54 (FLGMSFFLFILLLAAGYACVQ). His-140 is a binding site for Zn(2+). Glu-141 is a catalytic residue. Residue His-144 coordinates Zn(2+). The next 2 membrane-spanning stretches (helical) occupy residues 155-175 (IVFGLVSAVGLISDMVLRALI) and 186-206 (AFSFAIVLFFSLLAPIAAMLV). Zn(2+) is bound at residue Glu-215.

The protein belongs to the peptidase M48B family. Zn(2+) is required as a cofactor.

It localises to the cell membrane. The chain is Protease HtpX homolog from Tropheryma whipplei (strain TW08/27) (Whipple's bacillus).